The primary structure comprises 374 residues: L-serine/homoserine O-acetyltransferase (374 aa).

The region spanning Ala46–Val357 is the AB hydrolase-1 domain. Catalysis depends on Ser149, which acts as the Nucleophile. Active-site residues include Asp319 and His352.

Belongs to the AB hydrolase superfamily. MetX family. Homodimer.

It localises to the cytoplasm. It catalyses the reaction L-serine + acetyl-CoA = O-acetyl-L-serine + CoA. The enzyme catalyses L-homoserine + acetyl-CoA = O-acetyl-L-homoserine + CoA. It functions in the pathway antibiotic biosynthesis. Involved in the biosynthesis of the antibiotic D-cycloserine (DCS), a cyclic structural analog of D-alanine, used as an antitubercular agent. Catalyzes the transfer of the acetyl group from acetyl-CoA to the hydroxyl group of L-serine to yield the activated serine, O-acetyl-L-serine. It prefers L-serine over L-homoserine. The polypeptide is L-serine/homoserine O-acetyltransferase (Streptomyces lavendulae).